The chain runs to 289 residues: 4-diphosphocytidyl-2-C-methyl-D-erythritol kinase (289 aa).

Residue K10 is part of the active site. P94–S104 is a binding site for ATP. D136 is a catalytic residue.

It belongs to the GHMP kinase family. IspE subfamily.

It catalyses the reaction 4-CDP-2-C-methyl-D-erythritol + ATP = 4-CDP-2-C-methyl-D-erythritol 2-phosphate + ADP + H(+). Its pathway is isoprenoid biosynthesis; isopentenyl diphosphate biosynthesis via DXP pathway; isopentenyl diphosphate from 1-deoxy-D-xylulose 5-phosphate: step 3/6. Functionally, catalyzes the phosphorylation of the position 2 hydroxy group of 4-diphosphocytidyl-2C-methyl-D-erythritol. In Geobacillus sp. (strain WCH70), this protein is 4-diphosphocytidyl-2-C-methyl-D-erythritol kinase.